An 88-amino-acid chain; its full sequence is Small ribosomal subunit protein bS20 (88 aa).

A compositionally biased stretch (basic residues) spans 1–10; that stretch reads MANHKSSLKR. A disordered region spans residues 1–24; the sequence is MANHKSSLKRAKQDIVRNTRNKSR.

It belongs to the bacterial ribosomal protein bS20 family.

Binds directly to 16S ribosomal RNA. This chain is Small ribosomal subunit protein bS20, found in Desulfosudis oleivorans (strain DSM 6200 / JCM 39069 / Hxd3) (Desulfococcus oleovorans).